Reading from the N-terminus, the 46-residue chain is Protein PsbN (46 aa).

Residues 10–30 (LIITILAVTIAFTAVSLYTAF) form a helical membrane-spanning segment.

This sequence belongs to the PsbN family.

It is found in the cellular thylakoid membrane. May play a role in photosystem I and II biogenesis. In Acaryochloris marina (strain MBIC 11017), this protein is Protein PsbN.